A 177-amino-acid polypeptide reads, in one-letter code: Putative HVA22-like protein g (177 aa).

The segment at 145-165 (QSTPKSKAEEKKETTIPKLDD) is disordered. Residues 150 to 165 (SKAEEKKETTIPKLDD) are compositionally biased toward basic and acidic residues.

It belongs to the DP1 family.

The protein is Putative HVA22-like protein g (HVA22G) of Arabidopsis thaliana (Mouse-ear cress).